The chain runs to 359 residues: ATPase ASNA1 homolog (359 aa).

23 to 30 (KGGVGKTT) contacts ATP. Residue Asp63 is part of the active site. Positions 252 and 279 each coordinate ATP. Zn(2+)-binding residues include Cys291 and Cys294.

It belongs to the arsA ATPase family. As to quaternary structure, homodimer.

The protein localises to the cytoplasm. The protein resides in the endoplasmic reticulum. Functionally, ATPase required for the post-translational delivery of tail-anchored (TA) proteins to the endoplasmic reticulum. Recognizes and selectively binds the transmembrane domain of TA proteins in the cytosol. This complex then targets to the endoplasmic reticulum by membrane-bound receptors, where the tail-anchored protein is released for insertion. This process is regulated by ATP binding and hydrolysis. ATP binding drives the homodimer towards the closed dimer state, facilitating recognition of newly synthesized TA membrane proteins. ATP hydrolysis is required for insertion. Subsequently, the homodimer reverts towards the open dimer state, lowering its affinity for the membrane-bound receptor, and returning it to the cytosol to initiate a new round of targeting. The sequence is that of ATPase ASNA1 homolog from Trypanosoma cruzi (strain CL Brener).